We begin with the raw amino-acid sequence, 212 residues long: Uridine kinase (212 aa).

Residue 13–20 (GASASGKS) coordinates ATP.

Belongs to the uridine kinase family.

It is found in the cytoplasm. The catalysed reaction is uridine + ATP = UMP + ADP + H(+). It catalyses the reaction cytidine + ATP = CMP + ADP + H(+). It participates in pyrimidine metabolism; CTP biosynthesis via salvage pathway; CTP from cytidine: step 1/3. Its pathway is pyrimidine metabolism; UMP biosynthesis via salvage pathway; UMP from uridine: step 1/1. In Shewanella oneidensis (strain ATCC 700550 / JCM 31522 / CIP 106686 / LMG 19005 / NCIMB 14063 / MR-1), this protein is Uridine kinase.